Here is a 578-residue protein sequence, read N- to C-terminus: Isocitrate dehydrogenase kinase/phosphatase (578 aa).

ATP contacts are provided by residues 315-321 and Lys336; that span reads APGIRGM. Asp371 is a catalytic residue.

Belongs to the AceK family.

It is found in the cytoplasm. The catalysed reaction is L-seryl-[isocitrate dehydrogenase] + ATP = O-phospho-L-seryl-[isocitrate dehydrogenase] + ADP + H(+). Functionally, bifunctional enzyme which can phosphorylate or dephosphorylate isocitrate dehydrogenase (IDH) on a specific serine residue. This is a regulatory mechanism which enables bacteria to bypass the Krebs cycle via the glyoxylate shunt in response to the source of carbon. When bacteria are grown on glucose, IDH is fully active and unphosphorylated, but when grown on acetate or ethanol, the activity of IDH declines drastically concomitant with its phosphorylation. The polypeptide is Isocitrate dehydrogenase kinase/phosphatase (Shigella boydii serotype 18 (strain CDC 3083-94 / BS512)).